The primary structure comprises 359 residues: Alanine racemase (359 aa).

Lys34 (proton acceptor; specific for D-alanine) is an active-site residue. Lys34 carries the N6-(pyridoxal phosphate)lysine modification. Position 129 (Arg129) interacts with substrate. The Proton acceptor; specific for L-alanine role is filled by Tyr254. Residue Met302 coordinates substrate.

This sequence belongs to the alanine racemase family. It depends on pyridoxal 5'-phosphate as a cofactor.

The enzyme catalyses L-alanine = D-alanine. It participates in amino-acid biosynthesis; D-alanine biosynthesis; D-alanine from L-alanine: step 1/1. In terms of biological role, catalyzes the interconversion of L-alanine and D-alanine. May also act on other amino acids. The sequence is that of Alanine racemase (alr) from Yersinia pestis.